The sequence spans 275 residues: Coagulation factor IX (275 aa).

Tyr-23 bears the Sulfotyrosine mark. N-linked (GlcNAc...) asparagine glycosylation occurs at Asn-25. Thr-27 carries the phosphothreonine modification. Residue Asn-35 is glycosylated (N-linked (GlcNAc...) asparagine). A glycan (O-linked (GalNAc...) threonine) is linked at Thr-47. Residues 49-275 enclose the Peptidase S1 domain; that stretch reads IVGGENAKPG…YTRVSWYVNW (227 aa). Cys-74 and Cys-90 form a disulfide bridge. His-89 serves as the catalytic Charge relay system. Asn-96 carries an N-linked (GlcNAc...) asparagine glycan. Positions 103, 105, 108, 110, and 113 each coordinate Ca(2+). A glycan (N-linked (GlcNAc...) asparagine) is linked at Asn-128. Asp-137 serves as the catalytic Charge relay system. 2 disulfides stabilise this stretch: Cys-204/Cys-218 and Cys-229/Cys-257. Ser-233 acts as the Charge relay system in catalysis.

The protein belongs to the peptidase S1 family. As to quaternary structure, heterodimer of a light chain and a heavy chain; disulfide-linked. Interacts (inactive and activated) with F11 (activated) in calcium-dependent manner. Interacts with SERPINC1. Activated by factor XIa, which excises the activation peptide. The propeptide can also be removed by snake venom protease. Activated by coagulation factor VIIa-tissue factor (F7-F3) complex in calcium-dependent manner.

It is found in the secreted. The enzyme catalyses Selective cleavage of Arg-|-Ile bond in factor X to form factor Xa.. In terms of biological role, factor IX is a vitamin K-dependent plasma protein that participates in the intrinsic pathway of blood coagulation by converting factor X to its active form in the presence of Ca(2+) ions, phospholipids, and factor VIIIa. The polypeptide is Coagulation factor IX (F9) (Oryctolagus cuniculus (Rabbit)).